Consider the following 198-residue polypeptide: Peptidyl-tRNA hydrolase (198 aa).

Residue Tyr-14 coordinates tRNA. Residue His-19 is the Proton acceptor of the active site. Positions 64, 66, and 112 each coordinate tRNA.

It belongs to the PTH family. Monomer.

The protein resides in the cytoplasm. The enzyme catalyses an N-acyl-L-alpha-aminoacyl-tRNA + H2O = an N-acyl-L-amino acid + a tRNA + H(+). Hydrolyzes ribosome-free peptidyl-tRNAs (with 1 or more amino acids incorporated), which drop off the ribosome during protein synthesis, or as a result of ribosome stalling. In terms of biological role, catalyzes the release of premature peptidyl moieties from peptidyl-tRNA molecules trapped in stalled 50S ribosomal subunits, and thus maintains levels of free tRNAs and 50S ribosomes. In Beijerinckia indica subsp. indica (strain ATCC 9039 / DSM 1715 / NCIMB 8712), this protein is Peptidyl-tRNA hydrolase.